A 325-amino-acid chain; its full sequence is Diacylglycerol acyltransferase/mycolyltransferase Ag85B (325 aa).

The N-terminal stretch at 1 to 40 (MTDVSRKIRAWGRRLMIGTAAAVVLPGLVGLAGGAATAGA) is a signal peptide. 82–83 (LR) contacts substrate. Positions 98–108 (FEWYYQSGLSI) are fibronectin-binding. A disulfide bond links Cys-127 and Cys-132. 2 residues coordinate substrate: Ser-166 and Asp-194. Catalysis depends on Ser-166, which acts as the Nucleophile. Residue Glu-270 is part of the active site. Substrate is bound by residues 272–275 (FVRS), Lys-279, and 302–304 (HSW). His-302 is an active-site residue.

This sequence belongs to the mycobacterial A85 antigen family.

The protein resides in the secreted. It carries out the reaction 2 alpha,alpha'-trehalose 6-mycolate = alpha,alpha'-trehalose 6,6'-bismycolate + alpha,alpha-trehalose. The catalysed reaction is an acyl-CoA + a 1,2-diacyl-sn-glycerol = a triacyl-sn-glycerol + CoA. Its function is as follows. The antigen 85 proteins (FbpA, FbpB, FbpC) are responsible for the high affinity of mycobacteria for fibronectin, a large adhesive glycoprotein, which facilitates the attachment of M.tuberculosis to murine alveolar macrophages (AMs). They also help to maintain the integrity of the cell wall by catalyzing the transfer of mycolic acids to cell wall arabinogalactan and through the synthesis of alpha,alpha-trehalose dimycolate (TDM, cord factor). They catalyze the transfer of a mycoloyl residue from one molecule of alpha,alpha-trehalose monomycolate (TMM) to another TMM, leading to the formation of TDM. The polypeptide is Diacylglycerol acyltransferase/mycolyltransferase Ag85B (fbpB) (Mycobacterium tuberculosis (strain ATCC 25177 / H37Ra)).